Consider the following 730-residue polypeptide: Diacylglycerol kinase alpha (730 aa).

EF-hand domains are found at residues 111–146 (RPED…MMRV) and 156–191 (ELRP…TVPL). Ca(2+) contacts are provided by D124, D126, N128, E135, D169, D171, S173, S175, and E180. 2 Phorbol-ester/DAG-type zinc fingers span residues 206–254 (NHIW…AQPC) and 270–320 (SHLW…GPEC). A DAGKc domain is found at 368-501 (SNTHPLLVFI…LDRWFLEVIP (134 aa)). K479 is subject to N6-acetyllysine.

It belongs to the eukaryotic diacylglycerol kinase family. In terms of assembly, monomer.

It localises to the cytoplasm. The protein localises to the cytosol. It catalyses the reaction a 1,2-diacyl-sn-glycerol + ATP = a 1,2-diacyl-sn-glycero-3-phosphate + ADP + H(+). The enzyme catalyses a 1-O-alkyl-sn-glycerol + ATP = a 1-O-alkyl-sn-glycero-3-phosphate + ADP + H(+). The catalysed reaction is 1-O-alkyl-2-acyl-sn-glycerol + ATP = 1-O-alkyl-2-acyl-sn-glycero-3-phosphate + ADP + H(+). It carries out the reaction 1,2-dihexadecanoyl-sn-glycerol + ATP = 1,2-dihexadecanoyl-sn-glycero-3-phosphate + ADP + H(+). It catalyses the reaction 1-hexadecanoyl-2-(9Z-octadecenoyl)-sn-glycerol + ATP = 1-hexadecanoyl-2-(9Z-octadecenoyl)-sn-glycero-3-phosphate + ADP + H(+). The enzyme catalyses 2-(9Z-octadecenoyl)-glycerol + ATP = 2-(9Z-octadecenoyl)-sn-glycero-3-phosphate + ADP + H(+). The catalysed reaction is 1,2-di-(9Z-octadecenoyl)-sn-glycerol + ATP = 1,2-di-(9Z-octadecenoyl)-sn-glycero-3-phosphate + ADP + H(+). It carries out the reaction 1-octadecanoyl-2-(5Z,8Z,11Z,14Z-eicosatetraenoyl)-sn-glycerol + ATP = 1-octadecanoyl-2-(5Z,8Z,11Z,14Z-eicosatetraenoyl)-sn-glycero-3-phosphate + ADP + H(+). It catalyses the reaction 1,2-didecanoyl-sn-glycerol + ATP = 1,2-didecanoyl-sn-glycero-3-phosphate + ADP + H(+). The enzyme catalyses 1-O-hexadecyl-2-acetyl-sn-glycerol + ATP = 1-O-hexadecyl-2-acetyl-sn-glycero-3-phosphate + ADP + H(+). The catalysed reaction is 1-O-hexadecyl-2-(5Z,8Z,11Z,14Z-eicosatetraenoyl)-sn-glycerol + ATP = 1-O-hexadecyl-2-(5Z,8Z,11Z,14Z-eicosatetraenoyl)-sn-glycero-3-phosphate + ADP + H(+). It carries out the reaction 1-O-hexadecyl-2-(9Z-octadecenoyl)-sn-glycerol + ATP = 1-O-hexadecyl-2-(9Z-octadecenoyl)-sn-glycero-3-phosphate + ADP + H(+). It catalyses the reaction 1-O-hexadecyl-sn-glycerol + ATP = 1-O-hexadecyl-sn-glycero-3-phosphate + ADP + H(+). It participates in lipid metabolism; glycerolipid metabolism. Stimulated by calcium and phosphatidylserine. Functionally, diacylglycerol kinase that converts diacylglycerol/DAG into phosphatidic acid/phosphatidate/PA and regulates the respective levels of these two bioactive lipids. Thereby, acts as a central switch between the signaling pathways activated by these second messengers with different cellular targets and opposite effects in numerous biological processes. Also plays an important role in the biosynthesis of complex lipids. Can also phosphorylate 1-alkyl-2-acylglycerol in vitro as efficiently as diacylglycerol provided it contains an arachidonoyl group. Also involved in the production of alkyl-lysophosphatidic acid, another bioactive lipid, through the phosphorylation of 1-alkyl-2-acetyl glycerol. The polypeptide is Diacylglycerol kinase alpha (Dgka) (Mus musculus (Mouse)).